Here is a 355-residue protein sequence, read N- to C-terminus: Magnesium-chelatase subunit ChlI (355 aa).

46 to 53 (GDRGTGKS) is an ATP binding site. Cysteines 281 and 323 form a disulfide.

Belongs to the Mg-chelatase subunits D/I family. As to quaternary structure, the magnesium chelatase complex is a heterotrimer consisting of subunits CHLI, CHLD and CHLH.

It is found in the plastid. The protein localises to the chloroplast. The catalysed reaction is protoporphyrin IX + Mg(2+) + ATP + H2O = Mg-protoporphyrin IX + ADP + phosphate + 3 H(+). It participates in porphyrin-containing compound metabolism; chlorophyll biosynthesis. Its activity is regulated as follows. Redox regulation; active in reducing conditions, inactive in oxidizing conditions. Thioredoxins f and m mediate the reversible reductive activation of oxidized CHLI. Involved in chlorophyll biosynthesis. Catalyzes the insertion of magnesium ion into protoporphyrin IX to yield Mg-protoporphyrin IX. The magnesium-chelatase is a complex of three subunits, CHLI, CHLD and CHLH. The reaction takes place in two steps, with an ATP-dependent activation followed by an ATP-dependent chelation step. The sequence is that of Magnesium-chelatase subunit ChlI (chlI) from Nephroselmis olivacea (Green alga).